A 128-amino-acid chain; its full sequence is Ribosome-binding factor A (128 aa).

This sequence belongs to the RbfA family. As to quaternary structure, monomer. Binds 30S ribosomal subunits, but not 50S ribosomal subunits or 70S ribosomes.

It is found in the cytoplasm. In terms of biological role, one of several proteins that assist in the late maturation steps of the functional core of the 30S ribosomal subunit. Associates with free 30S ribosomal subunits (but not with 30S subunits that are part of 70S ribosomes or polysomes). Required for efficient processing of 16S rRNA. May interact with the 5'-terminal helix region of 16S rRNA. This is Ribosome-binding factor A from Haemophilus influenzae (strain 86-028NP).